The sequence spans 1256 residues: Octopamine receptor beta-3R (1256 aa).

The Extracellular portion of the chain corresponds to 1–143 (MSGVNVADLL…LDLSLLLLKG (143 aa)). N-linked (GlcNAc...) asparagine glycans are attached at residues Asn-36, Asn-113, and Asn-117. The chain crosses the membrane as a helical span at residues 144–164 (FIFSSIILAAVLGNALVIISV). Residues 165-171 (QRNRKLR) are Cytoplasmic-facing. The chain crosses the membrane as a helical span at residues 172–192 (VITNYFVVSLAMADMLVALCA). Topologically, residues 193 to 213 (MTFNASVELSGGKWMFGPFMC) are extracellular. Residue Asn-196 is glycosylated (N-linked (GlcNAc...) asparagine). The chain crosses the membrane as a helical span at residues 214–236 (NVYNSLDVYFSTASILHLCCISV). At 237–258 (DRYYAIVRPLEYPLNMTHKTVC) the chain is on the cytoplasmic side. The helical transmembrane segment at 259 to 279 (FMLANVWILPALISFTPIFLG) threads the bilayer. The Extracellular portion of the chain corresponds to 280–305 (WYTTEEHLREISLHPDQCSFVVNKAY). Residues 306 to 326 (ALISSSVSFWIPGIVMLVMYW) traverse the membrane as a helical segment. Residues 327-1169 (RIFKEAIRQR…WKAEHKAART (843 aa)) lie on the Cytoplasmic side of the membrane. 5 disordered regions span residues 377–427 (AREE…DLRD), 480–512 (ELDKEHSHPNGPQQQLSLTSGSGNSEPEPESTA), 665–698 (LSHSYNGCGGGKERKLERRQRQHSDTDSTPNKPD), 751–774 (GESPQQPATPPPSLSPPELPEPSG), and 1087–1117 (DTTVTTSSKRSIHEQTPDLGQRPASSSSSTR). A compositionally biased stretch (acidic residues) spans 396 to 406 (TDEDDDRDECD). The segment covering 489-498 (NGPQQQLSLT) has biased composition (polar residues). Residues 757–770 (PATPPPSLSPPELP) show a composition bias toward pro residues. A helical transmembrane segment spans residues 1170–1190 (LGIIMGVFLLCWLPFFLWYVI). Over 1191 to 1202 (TSLCGPACPCPD) the chain is Extracellular. The helical transmembrane segment at 1203-1223 (VLVVVLFWIGYFNSTLNPLIY) threads the bilayer. At 1224–1256 (AYFNRDFREAFRNTLECVLPCLEKRNPYNAYYV) the chain is on the cytoplasmic side.

The protein belongs to the G-protein coupled receptor 1 family. In terms of tissue distribution, in the adult, expressed in the inferior and superior protocerebrum, the posterior lateral protocerebrum, the deutocerebrum, the surface of the subesophageal ganglion, the lateral cell body region, the cortical layer of the ventral nerve cord and the optic lobe medulla of the central nervous system (CNS). Also expressed in the nurse cells and follicle cells of the egg chambers in the ovary at oogenic stages 1-10, and spermatogonia and spermatocytes in the testis. Expressed ubiquitously in the embryonic CNS. In larvae, expressed in the ventral cortical layer of the ventral nerve cord, the cortical layer of the brain lobes, salivary glands, midgut, imaginal disks and developing reproductive organs. Expressed in the larval prothoracic gland with weak expression in other regions of the ring gland.

It is found in the cell membrane. Autoreceptor for octopamine, which is a neurotransmitter, neurohormone, and neuromodulator in invertebrates. Probably also acts as a receptor for tyramine during ecdysone biosynthesis. Required for the biosynthesis of the steroid hormone ecdysone which is necessary for metamorphosis. Involved in activation of prothoracicotropic hormone and insulin-like peptide signaling which is required for the expression of ecdysone biosynthetic genes. This is Octopamine receptor beta-3R from Drosophila melanogaster (Fruit fly).